A 347-amino-acid polypeptide reads, in one-letter code: NADH-ubiquinone oxidoreductase chain 2 (347 aa).

Helical transmembrane passes span 3–23 (PIIF…VMIS), 25–45 (HWLL…PIMM), 67–87 (SMLL…WTVM), 96–116 (MLMT…FWVP), 122–142 (IPLS…MSVL), 145–165 (IFPS…ILIG), 178–198 (IMAY…PYNP), 200–220 (MTLL…TMFM), 239–259 (IMTV…PLSG), 274–294 (NSII…YFYM), and 325–345 (FLPT…MLSV).

The protein belongs to the complex I subunit 2 family. As to quaternary structure, core subunit of respiratory chain NADH dehydrogenase (Complex I) which is composed of 45 different subunits. Interacts with TMEM242.

It is found in the mitochondrion inner membrane. It catalyses the reaction a ubiquinone + NADH + 5 H(+)(in) = a ubiquinol + NAD(+) + 4 H(+)(out). Functionally, core subunit of the mitochondrial membrane respiratory chain NADH dehydrogenase (Complex I) which catalyzes electron transfer from NADH through the respiratory chain, using ubiquinone as an electron acceptor. Essential for the catalytic activity and assembly of complex I. The protein is NADH-ubiquinone oxidoreductase chain 2 of Bos indicus (Zebu).